A 624-amino-acid polypeptide reads, in one-letter code: Phosphomethylpyrimidine synthase (624 aa).

A disordered region spans residues 75–99; the sequence is SPWIESRGDTESYTGRTPFALDDGL. Substrate contacts are provided by residues Asn226, Met255, Tyr284, His320, 340–342, 381–384, and Glu420; these read SRG and DGLR. His424 serves as a coordination point for Zn(2+). Residue Tyr447 participates in substrate binding. His488 is a binding site for Zn(2+). [4Fe-4S] cluster is bound by residues Cys568, Cys571, and Cys576.

The protein belongs to the ThiC family. As to quaternary structure, homodimer. [4Fe-4S] cluster is required as a cofactor.

The catalysed reaction is 5-amino-1-(5-phospho-beta-D-ribosyl)imidazole + S-adenosyl-L-methionine = 4-amino-2-methyl-5-(phosphooxymethyl)pyrimidine + CO + 5'-deoxyadenosine + formate + L-methionine + 3 H(+). It participates in cofactor biosynthesis; thiamine diphosphate biosynthesis. In terms of biological role, catalyzes the synthesis of the hydroxymethylpyrimidine phosphate (HMP-P) moiety of thiamine from aminoimidazole ribotide (AIR) in a radical S-adenosyl-L-methionine (SAM)-dependent reaction. This Albidiferax ferrireducens (strain ATCC BAA-621 / DSM 15236 / T118) (Rhodoferax ferrireducens) protein is Phosphomethylpyrimidine synthase.